The following is a 165-amino-acid chain: Protein YELLOW LEAF 1, choloroplastic (165 aa).

The N-terminal 51 residues, 1-51 (MPPLATMSSPGSLLLLTPAVYQGIGRNRGGQSQEGQSISSSRSLKTKLSVS), are a transit peptide targeting the chloroplast. The segment at 71 to 118 (TQTARRKSFSGPTSPPSGSVKEKVRSPKLDDGGTGFPPFRFGGGGGGG) is disordered. The segment covering 79–89 (FSGPTSPPSGS) has biased composition (low complexity). Residues 90–101 (VKEKVRSPKLDD) show a composition bias toward basic and acidic residues.

Interacts with atpB. As to expression, highly expressed in leaves. Expressed in leaf sheaths. Expressed at low levels in stems.

Its subcellular location is the plastid. It localises to the chloroplast. Required for photosynthetic protein complex assembly in chloroplast thylakoid membranes during leaf development. Maintains the abundance of the core protein complex PsaA-PsaB of photosystem I (PSI) in the thylakoid membrane. May play a role in the efficient biogenesis of the chloroplast ATP synthase complex, possibly by interacting with the beta subunit atpB. The sequence is that of Protein YELLOW LEAF 1, choloroplastic from Oryza sativa subsp. japonica (Rice).